Here is a 249-residue protein sequence, read N- to C-terminus: 5'-nucleotidase SurE (249 aa).

Residues Asp-9, Asp-10, Ser-40, and Asn-92 each coordinate a divalent metal cation.

It belongs to the SurE nucleotidase family. A divalent metal cation serves as cofactor.

It is found in the cytoplasm. It carries out the reaction a ribonucleoside 5'-phosphate + H2O = a ribonucleoside + phosphate. In terms of biological role, nucleotidase that shows phosphatase activity on nucleoside 5'-monophosphates. The sequence is that of 5'-nucleotidase SurE from Shewanella sp. (strain MR-4).